The following is a 498-amino-acid chain: Cytochrome P450 monooxygenase 110 (498 aa).

Residues 7–24 (YVFALLGILATLYFVRWS) traverse the membrane as a helical segment. N-linked (GlcNAc...) asparagine glycosylation occurs at Asn-425. Cys-440 is a heme binding site.

Belongs to the cytochrome P450 family. It depends on heme as a cofactor.

Its subcellular location is the membrane. The protein operates within secondary metabolite biosynthesis. In terms of biological role, cytochrome P450 monooxygenase that is able to use dehydroabietic acid and testosterone as substrates for oxidation, suggesting that the natural substrate(s) may be structurally related to steroid compounds. The protein is Cytochrome P450 monooxygenase 110 of Postia placenta (strain ATCC 44394 / Madison 698-R) (Brown rot fungus).